A 136-amino-acid polypeptide reads, in one-letter code: General odorant-binding protein 57e (136 aa).

A signal peptide spans 1–20 (MLDQLTLCLLLNFLCANVLA). Disulfide bonds link Cys28–Cys61, Cys57–Cys109, and Cys98–Cys118.

The protein belongs to the PBP/GOBP family.

In terms of biological role, present in the aqueous fluid surrounding olfactory sensory dendrites and are thought to aid in the capture and transport of hydrophobic odorants into and through this fluid. The protein is General odorant-binding protein 57e of Drosophila melanogaster (Fruit fly).